An 85-amino-acid polypeptide reads, in one-letter code: MAKKNAPSAPADFEQALGELEALVERMEQGELSLEASLAEFERGIALARQCQQALQAAEQKVRLLSGEGEEVPLDTPDAEDGDGE.

Residues 66–85 (SGEGEEVPLDTPDAEDGDGE) are disordered. The span at 68–85 (EGEEVPLDTPDAEDGDGE) shows a compositional bias: acidic residues.

It belongs to the XseB family. In terms of assembly, heterooligomer composed of large and small subunits.

The protein resides in the cytoplasm. The catalysed reaction is Exonucleolytic cleavage in either 5'- to 3'- or 3'- to 5'-direction to yield nucleoside 5'-phosphates.. In terms of biological role, bidirectionally degrades single-stranded DNA into large acid-insoluble oligonucleotides, which are then degraded further into small acid-soluble oligonucleotides. The chain is Exodeoxyribonuclease 7 small subunit from Thioalkalivibrio sulfidiphilus (strain HL-EbGR7).